The primary structure comprises 106 residues: Large ribosomal subunit protein bL31B (106 aa).

Positions 85–106 (PVQVAEEPVAKGKKKPSLKKKK) are disordered. Basic residues predominate over residues 95-106 (KGKKKPSLKKKK).

The protein belongs to the bacterial ribosomal protein bL31 family. Type B subfamily. As to quaternary structure, part of the 50S ribosomal subunit.

This is Large ribosomal subunit protein bL31B from Chlamydia felis (strain Fe/C-56) (Chlamydophila felis).